Here is a 386-residue protein sequence, read N- to C-terminus: Patatin-2-Kuras 2 (386 aa).

An N-terminal signal peptide occupies residues 1-23; it reads MATTKSFLILFFMILATTSSTCA. In terms of domain architecture, PNPLA spans 32–229; sequence LSIDGGGIKG…TVGDPALLSL (198 aa). The GXGXXG motif lies at 36–41; it reads GGGIKG. The short motif at 75–79 is the GXSXG element; that stretch reads GTSTG. Ser77 (nucleophile) is an active-site residue. N-linked (GlcNAc...) asparagine glycosylation is present at Asn115. Residue Asp215 is the Proton acceptor of the active site. A DGA/G motif is present at residues 215 to 217; the sequence is DGA. A coiled-coil region spans residues 321–384; the sequence is ENALTGTTTE…DRKKLRANKA (64 aa).

The protein belongs to the patatin family.

Its subcellular location is the vacuole. Probable lipolytic acyl hydrolase (LAH), an activity which is thought to be involved in the response of tubers to pathogens. The polypeptide is Patatin-2-Kuras 2 (pat2-k2) (Solanum tuberosum (Potato)).